Here is a 746-residue protein sequence, read N- to C-terminus: Teichoic acid poly(glycerol phosphate) polymerase (746 aa).

CDP-glycerol-binding positions include 473-477 (WHGTP), Arg540, 573-574 (PT), 610-612 (RMH), 652-653 (SS), and Asp657.

It belongs to the CDP-glycerol glycerophosphotransferase family.

The protein localises to the cell membrane. The enzyme catalyses 4-O-[(2R)-glycerylphospho]-N-acetyl-beta-D-mannosaminyl-(1-&gt;4)-N-acetyl-alpha-D-glucosaminyl di-trans,octa-cis-undecaprenyl diphosphate + n CDP-glycerol = 4-O-{[(2R)-1-glycerylphospho](n)-(2R)-1-glycerylphospho}-N-acetyl-beta-D-mannosaminyl-(1-&gt;4)-N-acetyl-alpha-D-glucosaminyl undecaprenyl diphosphate + n CMP + n H(+). Its pathway is cell wall biogenesis; poly(glycerol phosphate) teichoic acid biosynthesis. Functionally, responsible for the polymerization of the main chain of the major teichoic acid by sequential transfer of glycerol phosphate units from CDP-glycerol to the disaccharide linkage unit. Synthesizes polymers of approximately 35 glycerol phosphate units in length. The sequence is that of Teichoic acid poly(glycerol phosphate) polymerase (tagF) from Bacillus subtilis (strain 168).